The chain runs to 216 residues: Somatotropin (216 aa).

Residues 1–25 (MAPGSWFSPLFITVITLGLQWPQEA) form the signal peptide. Residue His-46 coordinates Zn(2+). Residues Cys-78 and Cys-189 are joined by a disulfide bond. Glu-198 contacts Zn(2+). Cys-206 and Cys-214 are oxidised to a cystine.

The protein belongs to the somatotropin/prolactin family.

It is found in the secreted. Functionally, growth hormone plays an important role in growth control. The chain is Somatotropin (GH) from Anas platyrhynchos (Mallard).